A 348-amino-acid chain; its full sequence is Dihydroorotase (348 aa).

Zn(2+) is bound by residues H17 and H19. Substrate-binding positions include H19–R21 and N45. Residues K103, H140, and H178 each coordinate Zn(2+). K103 carries the post-translational modification N6-carboxylysine. H140 is a binding site for substrate. Position 223 (L223) interacts with substrate. D251 serves as a coordination point for Zn(2+). The active site involves D251. Substrate contacts are provided by H255 and A267.

This sequence belongs to the metallo-dependent hydrolases superfamily. DHOase family. Class II DHOase subfamily. Homodimer. The cofactor is Zn(2+).

It carries out the reaction (S)-dihydroorotate + H2O = N-carbamoyl-L-aspartate + H(+). The protein operates within pyrimidine metabolism; UMP biosynthesis via de novo pathway; (S)-dihydroorotate from bicarbonate: step 3/3. Catalyzes the reversible cyclization of carbamoyl aspartate to dihydroorotate. The chain is Dihydroorotase from Escherichia coli O139:H28 (strain E24377A / ETEC).